The primary structure comprises 805 residues: Phosphoinositide 3-kinase adapter protein 1 (805 aa).

The 138-residue stretch at 8-145 folds into the TIR domain; that stretch reads RGCDILIVYS…AVKKAISEDS (138 aa). Residues 10–144 form a necessary and sufficient to mediate inhibition of NF-kappa-B downstream of activated TLRs; may mediate interaction with MYD88 and TIRAP region; that stretch reads CDILIVYSPD…AAVKKAISED (135 aa). A disordered region spans residues 145–165; that stretch reads SGCDSVTDTEPEDEKVVSYSK. Residues 181-317 form the DBB domain; it reads VQPDRIRCGA…NIPASGLHLF (137 aa). Position 263 is a phosphotyrosine (Y263). Phosphotyrosine; by SYK occurs at positions 419, 444, and 459. Y513 carries the post-translational modification Phosphotyrosine; by ABL1. The tract at residues 527-547 is disordered; that stretch reads ASRPPVPVPRPETTAPGAHQL. 2 positions are modified to phosphotyrosine; by ABL1: Y553 and Y570. The interval 571 to 590 is disordered; the sequence is VSSESIRKGPPVRPWRDRPQ. Y594 carries the post-translational modification Phosphotyrosine; by ABL1. S642 bears the Phosphoserine mark. A coiled-coil region spans residues 645–667; sequence FQQENLKRLRDSITRRQREKQKS. Over residues 654–672 the composition is skewed to basic and acidic residues; that stretch reads RDSITRRQREKQKSGKQTD. The tract at residues 654–679 is disordered; the sequence is RDSITRRQREKQKSGKQTDLEITVPI. Y694 carries the phosphotyrosine; by ABL1 modification. The segment at 697–805 is disordered; it reads GPRKSVIPPR…PPPPVPPRGR (109 aa). Residues 707–716 show a composition bias toward basic and acidic residues; the sequence is TELRRGDWKT. Residues 717 to 740 are compositionally biased toward low complexity; sequence DSTSSTASSTSNRSSTRSLLSVSS. S718 carries the phosphoserine modification. Pro residues predominate over residues 795–805; that stretch reads HPPPPVPPRGR.

As to quaternary structure, homooligomer. Interacts (phosphorylated on tyrosine residues within YXXM motifs) with PIK3R1 (via SH2 domain); required for BCR- and TLR-mediated activation of phosphoinositide 3-kinase. Interacts (via polyproline C-terminal region) with ABI1 (via SH3 domain); the interaction promotes phosphorylation of PIK3AP1 by ABL1. May interact with MYD88 and TIRAP. Constitutively phosphorylated. Phosphorylated on tyrosine residues in C-terminal region by ABL1. Phosphorylated on tyrosine residues within the YXXM motifs by BTK and SYK. Isoform 1 and isoform 2 are phosphorylated on tyrosine residues, most likely within the YXXM motifs, via CD19 activation. Toll-like receptor activation induces appearance of a phosphorylated form associated with membranes. In terms of tissue distribution, expressed in natural killer (NK) cells.

The protein resides in the cytoplasm. It localises to the cell membrane. Signaling adapter that contributes to B-cell development by linking B-cell receptor (BCR) signaling to the phosphoinositide 3-kinase (PI3K)-Akt signaling pathway. Has a complementary role to the BCR coreceptor CD19, coupling BCR and PI3K activation by providing a docking site for the PI3K subunit PIK3R1. Alternatively, links Toll-like receptor (TLR) signaling to PI3K activation, a process preventing excessive inflammatory cytokine production. Also involved in the activation of PI3K in natural killer cells. May be involved in the survival of mature B-cells via activation of REL. The chain is Phosphoinositide 3-kinase adapter protein 1 (PIK3AP1) from Homo sapiens (Human).